The sequence spans 126 residues: Large ribosomal subunit protein uL22 (126 aa).

The protein belongs to the universal ribosomal protein uL22 family. As to quaternary structure, part of the 50S ribosomal subunit.

In terms of biological role, this protein binds specifically to 23S rRNA; its binding is stimulated by other ribosomal proteins, e.g. L4, L17, and L20. It is important during the early stages of 50S assembly. It makes multiple contacts with different domains of the 23S rRNA in the assembled 50S subunit and ribosome. Its function is as follows. The globular domain of the protein is located near the polypeptide exit tunnel on the outside of the subunit, while an extended beta-hairpin is found that lines the wall of the exit tunnel in the center of the 70S ribosome. This Rhodospirillum rubrum (strain ATCC 11170 / ATH 1.1.1 / DSM 467 / LMG 4362 / NCIMB 8255 / S1) protein is Large ribosomal subunit protein uL22.